Reading from the N-terminus, the 571-residue chain is OTU domain-containing protein 5 (571 aa).

2 disordered regions span residues 1–111 (MTIL…GPGG) and 146–175 (PGHSKRRRQAPGVGAVGGGSPEREEVGAGY). The span at 11–30 (PPDADPANEPPPPGPMPPAP) shows a compositional bias: pro residues. A compositionally biased stretch (gly residues) spans 32 to 47 (RGGGVGVGGGGTGVGG). Over residues 63-75 (ASPPPQGPLPGPP) the composition is skewed to pro residues. Serine 64 carries the phosphoserine modification. Residues 84–97 (AVPPGAVAGPRPQQ) are compositionally biased toward low complexity. The residue at position 165 (serine 165) is a Phosphoserine. Residue tyrosine 175 is modified to Phosphotyrosine. Serine 177 is subject to Phosphoserine. Threonine 195 bears the Phosphothreonine mark. One can recognise an OTU domain in the interval 213-341 (FIIKQMKEDG…NIHYNSVVNP (129 aa)). Residues 218 to 224 (MKEDGAC) form a cys-loop region. Residue aspartate 221 is part of the active site. Cysteine 224 functions as the Nucleophile in the catalytic mechanism. The variable-loop stretch occupies residues 273–283 (KRKNNCHGNHI). The residue at position 328 (serine 328) is a Phosphoserine; by MTOR. Positions 329–334 (YHRNIH) are his-loop. The active site involves histidine 334. Phosphoserine occurs at positions 337 and 375. Residues 418–502 (ARQVRGPSQP…PGTSSQFSAG (85 aa)) are disordered. 2 stretches are compositionally biased toward low complexity: residues 430 to 443 (ASATCSSATAAASS) and 450 to 462 (SRSPRQRSSASSP). Position 452 is a phosphoserine (serine 452). Position 507 is a phosphothreonine (threonine 507). Serine 508 is subject to Phosphoserine; by MTOR.

The protein belongs to the peptidase C85 family. In terms of assembly, interacts with TRAF3. Phosphorylation at Ser-177 is required for deubiquitinating activity. Phosphorylation at Ser-328, Ser-337 and Ser-508 by MTOR promotes its activity. As to expression, expressed in various tissues, including the liver and placenta, as well as in peripheral blood leukocytes.

The protein resides in the nucleus. The enzyme catalyses Thiol-dependent hydrolysis of ester, thioester, amide, peptide and isopeptide bonds formed by the C-terminal Gly of ubiquitin (a 76-residue protein attached to proteins as an intracellular targeting signal).. Its activity is regulated as follows. Inhibited by N-ethyl-maleimide (NEM). Functionally, deubiquitinating enzyme that functions as a negative regulator of the innate immune system. Has peptidase activity towards 'Lys-48'- and 'Lys-63'-linked polyubiquitin chains. Can also cleave 'Lys-11'-linked ubiquitin chains (in vitro). Acts via TRAF3 deubiquitination and subsequent suppression of type I interferon (IFN) production. Controls neuroectodermal differentiation through cleaving 'Lys-48'-linked ubiquitin chains to counteract degradation of select chromatin regulators such as ARID1A, HDAC2 and HCF1. Acts as a positive regulator of mTORC1 and mTORC2 signaling following phosphorylation by MTOR: acts by mediating deubiquitination of BTRC, leading to its stability. In Homo sapiens (Human), this protein is OTU domain-containing protein 5.